Here is a 276-residue protein sequence, read N- to C-terminus: Rhamnulose-1-phosphate aldolase (276 aa).

Glutamate 117 is a catalytic residue. Zn(2+) contacts are provided by histidine 141, histidine 143, and histidine 212.

This sequence belongs to the aldolase class II family. RhaD subfamily. In terms of assembly, homotetramer. Zn(2+) serves as cofactor.

The protein localises to the cytoplasm. The catalysed reaction is L-rhamnulose 1-phosphate = (S)-lactaldehyde + dihydroxyacetone phosphate. It participates in carbohydrate degradation; L-rhamnose degradation; glycerone phosphate from L-rhamnose: step 3/3. In terms of biological role, catalyzes the reversible cleavage of L-rhamnulose-1-phosphate to dihydroxyacetone phosphate (DHAP) and L-lactaldehyde. The protein is Rhamnulose-1-phosphate aldolase of Enterobacter sp. (strain 638).